Reading from the N-terminus, the 1331-residue chain is Alpha,alpha-trehalose-phosphate synthase [UDP-forming] 1 (1331 aa).

The segment covering 1–13 (MTDTATGVHSNAN) has biased composition (polar residues). Disordered regions lie at residues 1–50 (MTDT…DNDP), 71–118 (TGKE…SGQL), and 1312–1331 (PMDQ…SFGN). Over residues 39-50 (DPFDRPKNDNDP) the composition is skewed to basic and acidic residues. The span at 77–98 (LDESDDMTENEDHDEMANEDDG) shows a compositional bias: acidic residues. Residues 102–112 (NEKKVETRKMD) show a composition bias toward basic and acidic residues. Positions 1318–1331 (SSTLGASLGTSFGN) are enriched in polar residues.

In the N-terminal section; belongs to the glycosyltransferase 20 family. It in the C-terminal section; belongs to the gob-1 trehalose phosphatase family.

The enzyme catalyses D-glucose 6-phosphate + UDP-alpha-D-glucose = alpha,alpha-trehalose 6-phosphate + UDP + H(+). Catalyzes the production of trehalose from glucose-6-phosphate and UDP-alpha-D-glucose in a 2 step process. This is Alpha,alpha-trehalose-phosphate synthase [UDP-forming] 1 (tps-1) from Caenorhabditis elegans.